Here is a 40-residue protein sequence, read N- to C-terminus: Sapecin-C (40 aa).

3 disulfide bridges follow: Cys3-Cys30, Cys16-Cys36, and Cys20-Cys38.

Belongs to the invertebrate defensin family. Type 1 subfamily. Hemocytes and fat body.

The protein localises to the secreted. Functionally, sapecins, which are potent bactericidal proteins, are produced in response to injury. Sapecin C is cytotoxic to Gram-positive bacteria. This Sarcophaga peregrina (Flesh fly) protein is Sapecin-C.